The following is a 744-amino-acid chain: Catalase-peroxidase (744 aa).

Residues 1–21 are disordered; sequence MANESKCPFHQTAGGGTSNRD. Residues 91–241 constitute a cross-link (tryptophyl-tyrosyl-methioninium (Trp-Tyr) (with M-267)); the sequence is WHSAGTYRIG…LAAVQMGLIY (151 aa). His92 acts as the Proton acceptor in catalysis. A cross-link (tryptophyl-tyrosyl-methioninium (Tyr-Met) (with W-91)) is located at residues 241–267; it reads YVNPEGPEGNPDPVASGKDIRDTFGRM. Residue His282 coordinates heme b. The tract at residues 361-387 is disordered; that stretch reads GAHQWRPKDGKGANTVPDAHDTTKRHA.

Belongs to the peroxidase family. Peroxidase/catalase subfamily. As to quaternary structure, homodimer or homotetramer. Requires heme b as cofactor. Post-translationally, formation of the three residue Trp-Tyr-Met cross-link is important for the catalase, but not the peroxidase activity of the enzyme.

It catalyses the reaction H2O2 + AH2 = A + 2 H2O. The catalysed reaction is 2 H2O2 = O2 + 2 H2O. Bifunctional enzyme with both catalase and broad-spectrum peroxidase activity. The sequence is that of Catalase-peroxidase from Pseudomonas entomophila (strain L48).